The chain runs to 548 residues: T-complex protein 1 subunit theta (548 aa).

The disordered stretch occupies residues 527-548 (QATGGPKPRGPKAQDEDDDGMA).

Belongs to the TCP-1 chaperonin family. Heterooligomeric complex.

It localises to the cytoplasm. Molecular chaperone; assists the folding of proteins upon ATP hydrolysis. Known to play a role, in vitro, in the folding of actin and tubulin. Required for correct subcellular localization of pgl-1. This chain is T-complex protein 1 subunit theta (cct-8), found in Caenorhabditis elegans.